Here is a 102-residue protein sequence, read N- to C-terminus: Small ribosomal subunit protein uS10 (102 aa).

The protein belongs to the universal ribosomal protein uS10 family. Part of the 30S ribosomal subunit.

Involved in the binding of tRNA to the ribosomes. The polypeptide is Small ribosomal subunit protein uS10 (Pyrococcus abyssi (strain GE5 / Orsay)).